The following is a 218-amino-acid chain: Ribonuclease S-7 (218 aa).

An N-terminal signal peptide occupies residues 1-22; that stretch reads MLNSPLTSVLFVLLFVLSPIYG. Residue Gln32 participates in RNA binding. Cys38 and Cys43 form a disulfide bridge. Asn49 is a glycosylation site (N-linked (GlcNAc...) asparagine). His53 serves as a coordination point for RNA. The active-site Proton donor is the His53. N-linked (GlcNAc...) asparagine glycosylation occurs at Asn59. Cys67 and Cys116 are oxidised to a cystine. RNA contacts are provided by residues 91–92, Phe105, 108–109, and 112–113; these read DL, HE, and KH. The active site involves Glu109. The Proton acceptor role is filled by His113. N-linked (GlcNAc...) asparagine glycosylation is present at Asn162. Cystine bridges form between Cys177/Cys207 and Cys190/Cys201.

The protein belongs to the RNase T2 family.

The protein resides in the secreted. The protein localises to the extracellular space. The enzyme catalyses a ribonucleotidyl-ribonucleotide-RNA + H2O = a 3'-end 3'-phospho-ribonucleotide-RNA + a 5'-end dephospho-ribonucleoside-RNA + H(+). Self-incompatibility (SI) is the inherited ability of a flowering plant to prevent self-fertilization by discriminating between self and non-self pollen during pollination. In many species of the Solanaceae, self-incompatibility is controlled by the single, multiallelic locus S. This stylar glycoprotein is associated with expression of self-incompatibility in potato. The polypeptide is Ribonuclease S-7 (Nicotiana alata (Winged tobacco)).